A 268-amino-acid chain; its full sequence is NAC transcription factor 29 (268 aa).

The NAC domain maps to 9–161 (LPPGFRFHPT…EWVLCRIYKK (153 aa)). Residues 106 to 167 (VGVKKALVFY…IYKKRGASKL (62 aa)) mediate DNA binding.

In terms of tissue distribution, expressed in senescing leaves, petals and sepals.

It is found in the nucleus. Functionally, transcription activator that binds to, and transactivates the promoter of the abscisic aldehyde oxidase AAO3. Promotes chlorophyll degradation in leaves by enhancing transcription of AAO3, which leads to increased levels of the senescence-inducing hormone abscisic acid (ABA). Involved in the control of dehydration in senescing leaves. Binds to the DNA sequence 5'-CACGTAAGT-3' of SAG113 promoter. SAG113 acts as a negative regulator of ABA signaling for stomatal closure in leaves, and controls water loss during leaf senescence. Transcription factor of the NAC family involved in senescence. May function in the transition between active cell division and cell expansion. Required for normal seed development and morphology. In Arabidopsis thaliana (Mouse-ear cress), this protein is NAC transcription factor 29 (NAC029).